The following is a 496-amino-acid chain: RNA-binding motif protein, Y chromosome, family 1 member E (496 aa).

One can recognise an RRM domain in the interval Gly8–Lys85. Disordered stretches follow at residues Asp67–Asp348 and Asp453–Tyr496. Low complexity-rich tracts occupy residues Pro97–Gly114 and Pro149–Gly159. The span at Asn175–Met184 shows a compositional bias: polar residues. Composition is skewed to basic and acidic residues over residues Arg204–Gly214, Asp242–Ser253, Ala276–Tyr289, Gly313–Tyr326, Ser335–Asp348, and Gly484–Tyr496.

Interacts with splicing factor proteins SFRS3/SRP20, TRA2B/SFRS10, KHDRBS1/SAM68 and KHDRBS3. In terms of tissue distribution, testis-specific.

It is found in the nucleus. RNA-binding protein which may be involved in spermatogenesis. Required for sperm development, possibly by participating in pre-mRNA splicing in the testis. This Homo sapiens (Human) protein is RNA-binding motif protein, Y chromosome, family 1 member E (RBMY1E).